A 325-amino-acid chain; its full sequence is NADH-quinone oxidoreductase subunit H (325 aa).

Transmembrane regions (helical) follow at residues isoleucine 11–phenylalanine 31, valine 81–valine 101, isoleucine 114–glycine 134, leucine 154–phenylalanine 174, valine 186–valine 206, phenylalanine 237–phenylalanine 257, leucine 265–isoleucine 285, and isoleucine 304–alanine 324.

The protein belongs to the complex I subunit 1 family. NDH-1 is composed of 13 different subunits. Subunits NuoA, H, J, K, L, M, N constitute the membrane sector of the complex.

Its subcellular location is the cell inner membrane. The enzyme catalyses a quinone + NADH + 5 H(+)(in) = a quinol + NAD(+) + 4 H(+)(out). Functionally, NDH-1 shuttles electrons from NADH, via FMN and iron-sulfur (Fe-S) centers, to quinones in the respiratory chain. The immediate electron acceptor for the enzyme in this species is believed to be ubiquinone. Couples the redox reaction to proton translocation (for every two electrons transferred, four hydrogen ions are translocated across the cytoplasmic membrane), and thus conserves the redox energy in a proton gradient. This subunit may bind ubiquinone. The protein is NADH-quinone oxidoreductase subunit H of Escherichia fergusonii (strain ATCC 35469 / DSM 13698 / CCUG 18766 / IAM 14443 / JCM 21226 / LMG 7866 / NBRC 102419 / NCTC 12128 / CDC 0568-73).